Consider the following 545-residue polypeptide: Glucose-6-phosphate isomerase (545 aa).

Glutamate 351 serves as the catalytic Proton donor. Residues histidine 382 and lysine 510 contribute to the active site.

Belongs to the GPI family.

The protein localises to the cytoplasm. The enzyme catalyses alpha-D-glucose 6-phosphate = beta-D-fructose 6-phosphate. The protein operates within carbohydrate biosynthesis; gluconeogenesis. It participates in carbohydrate degradation; glycolysis; D-glyceraldehyde 3-phosphate and glycerone phosphate from D-glucose: step 2/4. Its function is as follows. Catalyzes the reversible isomerization of glucose-6-phosphate to fructose-6-phosphate. This Shewanella putrefaciens (strain CN-32 / ATCC BAA-453) protein is Glucose-6-phosphate isomerase.